The sequence spans 237 residues: UPF0174 protein YaaW (237 aa).

It belongs to the UPF0174 family.

This Escherichia coli (strain K12) protein is UPF0174 protein YaaW (yaaW).